Reading from the N-terminus, the 445-residue chain is Putative serpin-Z5 (445 aa).

Positions 356 to 380 are RCL; the sequence is GTEAAASAINMVCGMSMTPEPRPVP.

It belongs to the serpin family.

Functionally, probable serine protease inhibitor. The protein is Putative serpin-Z5 of Oryza sativa subsp. japonica (Rice).